A 300-amino-acid chain; its full sequence is HTH-type transcriptional regulator ArgP (300 aa).

The region spanning 4 to 60 (FDYKLLAALAAVVEQGGFERAAQALGLSQSAVSQRIKLLEARVGQPVLVRETPPHPT) is the HTH lysR-type domain. The H-T-H motif DNA-binding region spans 21–40 (FERAAQALGLSQSAVSQRIK).

Belongs to the LysR transcriptional regulatory family. Homodimer.

In terms of biological role, controls the transcription of genes involved in arginine and lysine metabolism. This chain is HTH-type transcriptional regulator ArgP, found in Pseudomonas aeruginosa (strain UCBPP-PA14).